We begin with the raw amino-acid sequence, 568 residues long: Pentatricopeptide repeat-containing protein At1g73400, mitochondrial (568 aa).

A mitochondrion-targeting transit peptide spans 1–55 (MMRRLVSYFVRSRFSLHLSTTPPQRSALFSHILSSHLDSIQINKKISSFSVHRFC). 8 PPR repeats span residues 233-263 (EINA…MRHR), 267-301 (DANT…GHKP), 302-336 (ENFT…GSAV), 340-374 (TAKT…GCLP), 375-409 (DVST…GYPP), 410-444 (DIVT…RCAP), 445-479 (SVQT…DCVQ), and 480-514 (DVET…GLKL).

The protein belongs to the PPR family. P subfamily.

Its subcellular location is the mitochondrion. The sequence is that of Pentatricopeptide repeat-containing protein At1g73400, mitochondrial from Arabidopsis thaliana (Mouse-ear cress).